A 138-amino-acid chain; its full sequence is Histone H2B.3 (138 aa).

2 stretches are compositionally biased toward basic and acidic residues: residues 1-18 and 26-38; these read MAPKAEKKPVAEKAEKTT and EKRPPASKEGGDK. The tract at residues 1-46 is disordered; sequence MAPKAEKKPVAEKAEKTTAAKKTKAEKRPPASKEGGDKKGKKKSKK. An N6-acetyllysine mark is found at Lys-7 and Lys-27. A Glycyl lysine isopeptide (Lys-Gly) (interchain with G-Cter in ubiquitin) cross-link involves residue Lys-134.

This sequence belongs to the histone H2B family. In terms of assembly, the nucleosome is a histone octamer containing two molecules each of H2A, H2B, H3 and H4 assembled in one H3-H4 heterotetramer and two H2A-H2B heterodimers. The octamer wraps approximately 147 bp of DNA. In terms of processing, can be acetylated to form H2BK6ac and H2BK33ac. Monoubiquitinated to form H2BK143ub1; may give a specific tag for epigenetic transcriptional activation.

The protein resides in the nucleus. It is found in the chromosome. Functionally, core component of nucleosome. Nucleosomes wrap and compact DNA into chromatin, limiting DNA accessibility to the cellular machineries which require DNA as a template. Histones thereby play a central role in transcription regulation, DNA repair, DNA replication and chromosomal stability. DNA accessibility is regulated via a complex set of post-translational modifications of histones, also called histone code, and nucleosome remodeling. The chain is Histone H2B.3 from Triticum aestivum (Wheat).